Here is a 172-residue protein sequence, read N- to C-terminus: Single-stranded DNA-binding protein 2 (172 aa).

In terms of domain architecture, SSB spans 6–111; the sequence is VNKVILVGHI…VIVNVGGTMQ (106 aa). Residues 55–61 mediate DNA binding; that stretch reads WHRVVVF. The interval 113-172 is disordered; sequence LGRHNSQPQQEPQTPPTAAKGEGKAVKGAGNAAKGKNAAAPQQPPAQPDPAYDFDDDIPF. Residues 119-153 are compositionally biased toward low complexity; it reads QPQQEPQTPPTAAKGEGKAVKGAGNAAKGKNAAAP. Residues 167 to 172 carry the Important for interaction with partner proteins motif; sequence DDDIPF.

As to quaternary structure, homotetramer.

Functionally, plays an important role in DNA replication, recombination and repair. Binds to ssDNA and to an array of partner proteins to recruit them to their sites of action during DNA metabolism. In Salmonella typhimurium (strain LT2 / SGSC1412 / ATCC 700720), this protein is Single-stranded DNA-binding protein 2 (ssb2).